The following is a 390-amino-acid chain: Succinate--CoA ligase [ADP-forming] subunit beta (390 aa).

Residues 9–245 (KHLLKKYNIP…TTQEDEHETM (237 aa)) enclose the ATP-grasp domain. Residues Lys-46, 53–55 (GRG), Glu-99, Ser-102, and Glu-107 each bind ATP. Residues Asn-200 and Asp-214 each contribute to the Mg(2+) site. Substrate-binding positions include Asn-265 and 322–324 (GIV).

The protein belongs to the succinate/malate CoA ligase beta subunit family. As to quaternary structure, heterotetramer of two alpha and two beta subunits. Requires Mg(2+) as cofactor.

It carries out the reaction succinate + ATP + CoA = succinyl-CoA + ADP + phosphate. The enzyme catalyses GTP + succinate + CoA = succinyl-CoA + GDP + phosphate. The protein operates within carbohydrate metabolism; tricarboxylic acid cycle; succinate from succinyl-CoA (ligase route): step 1/1. Succinyl-CoA synthetase functions in the citric acid cycle (TCA), coupling the hydrolysis of succinyl-CoA to the synthesis of either ATP or GTP and thus represents the only step of substrate-level phosphorylation in the TCA. The beta subunit provides nucleotide specificity of the enzyme and binds the substrate succinate, while the binding sites for coenzyme A and phosphate are found in the alpha subunit. The chain is Succinate--CoA ligase [ADP-forming] subunit beta from Coxiella burnetii (strain CbuK_Q154) (Coxiella burnetii (strain Q154)).